Consider the following 355-residue polypeptide: S-adenosylmethionine:tRNA ribosyltransferase-isomerase (355 aa).

It belongs to the QueA family. In terms of assembly, monomer.

The protein resides in the cytoplasm. The enzyme catalyses 7-aminomethyl-7-carbaguanosine(34) in tRNA + S-adenosyl-L-methionine = epoxyqueuosine(34) in tRNA + adenine + L-methionine + 2 H(+). It functions in the pathway tRNA modification; tRNA-queuosine biosynthesis. Functionally, transfers and isomerizes the ribose moiety from AdoMet to the 7-aminomethyl group of 7-deazaguanine (preQ1-tRNA) to give epoxyqueuosine (oQ-tRNA). This chain is S-adenosylmethionine:tRNA ribosyltransferase-isomerase, found in Burkholderia lata (strain ATCC 17760 / DSM 23089 / LMG 22485 / NCIMB 9086 / R18194 / 383).